The chain runs to 126 residues: Large ribosomal subunit protein uL22 (126 aa).

This sequence belongs to the universal ribosomal protein uL22 family. As to quaternary structure, part of the 50S ribosomal subunit.

In terms of biological role, this protein binds specifically to 23S rRNA; its binding is stimulated by other ribosomal proteins, e.g. L4, L17, and L20. It is important during the early stages of 50S assembly. It makes multiple contacts with different domains of the 23S rRNA in the assembled 50S subunit and ribosome. The globular domain of the protein is located near the polypeptide exit tunnel on the outside of the subunit, while an extended beta-hairpin is found that lines the wall of the exit tunnel in the center of the 70S ribosome. The chain is Large ribosomal subunit protein uL22 from Rhodospirillum rubrum (strain ATCC 11170 / ATH 1.1.1 / DSM 467 / LMG 4362 / NCIMB 8255 / S1).